The primary structure comprises 217 residues: UPF0319 protein HS_1349 (217 aa).

The first 21 residues, 1–21 (MKFSFAALASAMLLTSTAAFA), serve as a signal peptide directing secretion.

This sequence belongs to the UPF0319 family.

This is UPF0319 protein HS_1349 from Histophilus somni (strain 129Pt) (Haemophilus somnus).